The primary structure comprises 179 residues: MSRIGKQPIPIPSGVEVKIGNDVVEVKGPKGALTTPVCSVLSYEVTDGKVVITRLDETRQTRAQHGLRRTLLANCIEGVSKGFSKTLEVVGVGYKVAVKGDVVDLSVGYSHPVLIDLPAGISAKAEGNKLTISGVDKELVGEVAAQMRRVRKPEPYKGKGIKYDNEQIRRKAGKSGGKK.

The interval Arg-151–Lys-179 is disordered. Positions Lys-152 to Arg-169 are enriched in basic and acidic residues. Basic residues predominate over residues Arg-170–Lys-179.

The protein belongs to the universal ribosomal protein uL6 family. Part of the 50S ribosomal subunit.

In terms of biological role, this protein binds to the 23S rRNA, and is important in its secondary structure. It is located near the subunit interface in the base of the L7/L12 stalk, and near the tRNA binding site of the peptidyltransferase center. The polypeptide is Large ribosomal subunit protein uL6 (Nitratidesulfovibrio vulgaris (strain ATCC 29579 / DSM 644 / CCUG 34227 / NCIMB 8303 / VKM B-1760 / Hildenborough) (Desulfovibrio vulgaris)).